The chain runs to 966 residues: Dynamin-like GTPase OPA1, mitochondrial (966 aa).

A mitochondrion-targeting transit peptide spans M1 to T86. At F87–R95 the chain is on the mitochondrial matrix side. The helical transmembrane segment at L96–Y112 threads the bilayer. At T113–D776 the chain is on the mitochondrial intermembrane side. The segment at E189 to D217 is disordered. The span at S207–D217 shows a compositional bias: basic and acidic residues. A coiled-coil region spans residues K213–K259. One can recognise a Dynamin-type G domain in the interval Q291–E567. Positions G301–T308 are G1 motif. Residues S304, G306, K307, T308, S309, and G323 each coordinate GTP. T308 contacts Mg(2+). The G2 motif stretch occupies residues M327–R330. Residues T329 and D404 each contribute to the Mg(2+) site. Residues D404–G407 form a G3 motif region. Residues T473–D476 are G4 motif. Residues K474, D476, and T509 each contribute to the GTP site. Positions V507–G510 are G5 motif. 2 stalk region regions span residues D595–T842 and C880–I934. Residues T742 to C862 are paddle region. An intramembrane segment occupies W777–R787. Topologically, residues T788 to K966 are mitochondrial intermembrane. A disulfide bond links C862 and C880. Residues R901–K966 are a coiled coil.

Belongs to the TRAFAC class dynamin-like GTPase superfamily. Dynamin/Fzo/YdjA family. As to quaternary structure, oligomeric complex consisting of membrane-bound and soluble forms of OPA1. Post-translationally, cleaved by OMA1 or YME1L downstream of the transmembrane region in response to different signals to generate soluble forms. Cleaved by OMA1 at position S1 following stress conditions, generating the short soluble form (Dynamin-like GTPase OPA1, short form; S-OPA1).

It is found in the mitochondrion inner membrane. Its subcellular location is the mitochondrion intermembrane space. It carries out the reaction GTP + H2O = GDP + phosphate + H(+). Functionally, dynamin-related GTPase that is essential for normal mitochondrial morphology by mediating fusion of the mitochondrial inner membranes, regulating cristae morphology and maintaining respiratory chain function. Exists in two forms: the transmembrane, long form (Dynamin-like GTPase OPA1, long form; L-OPA1), which is tethered to the inner mitochondrial membrane, and the short soluble form (Dynamin-like GTPase OPA1, short form; S-OPA1), which results from proteolytic cleavage and localizes in the intermembrane space. Both forms (L-OPA1 and S-OPA1) cooperate to catalyze the fusion of the mitochondrial inner membrane. The equilibrium between L-OPA1 and S-OPA1 is essential: excess levels of S-OPA1, produced by cleavage by OMA1 following loss of mitochondrial membrane potential, lead to an impaired equilibrium between L-OPA1 and S-OPA1, inhibiting mitochondrial fusion. The balance between L-OPA1 and S-OPA1 also influences cristae shape and morphology. Its role in mitochondrial morphology is required for mitochondrial genome maintenance. In terms of biological role, constitutes the transmembrane long form (L-OPA1) that plays a central role in mitochondrial inner membrane fusion and cristae morphology. L-OPA1 and the soluble short form (S-OPA1) form higher-order helical assemblies that coordinate the fusion of mitochondrial inner membranes. Inner membrane-anchored L-OPA1 molecules initiate membrane remodeling by recruiting soluble S-OPA1 to rapidly polymerize into a flexible cylindrical scaffold encaging the mitochondrial inner membrane. Once at the membrane surface, the formation of S-OPA1 helices induce bilayer curvature. OPA1 dimerization through the paddle region, which inserts into cardiolipin-containing membrane, promotes GTP hydrolysis and the helical assembly of a flexible OPA1 lattice on the membrane, which drives membrane curvature and mitochondrial fusion. Plays a role in the maintenance and remodeling of mitochondrial cristae, some invaginations of the mitochondrial inner membrane that provide an increase in the surface area. Probably acts by forming helical filaments at the inside of inner membrane tubes with the shape and dimensions of crista junctions. Its function is as follows. Constitutes the soluble short form (S-OPA1) generated by cleavage by OMA1, which plays a central role in mitochondrial inner membrane fusion and cristae morphology. The transmembrane long form (L-OPA1) and the S-OPA1 form higher-order helical assemblies that coordinate the fusion of mitochondrial inner membranes. Inner membrane-anchored L-OPA1 molecules initiate membrane remodeling by recruiting soluble S-OPA1 to rapidly polymerize into a flexible cylindrical scaffold encaging the mitochondrial inner membrane. Once at the membrane surface, the formation of S-OPA1 helices induce bilayer curvature. OPA1 dimerization through the paddle region, which inserts into cardiolipin-containing membrane, promotes GTP hydrolysis and the helical assembly of a flexible OPA1 lattice on the membrane, which drives membrane curvature and mitochondrial fusion. Excess levels of S-OPA1 produced by cleavage by OMA1 following stress conditions that induce loss of mitochondrial membrane potential, lead to an impaired equilibrium between L-OPA1 and S-OPA1, thereby inhibiting mitochondrial fusion. Plays a role in the maintenance and remodeling of mitochondrial cristae, some invaginations of the mitochondrial inner membrane that provide an increase in the surface area. Probably acts by forming helical filaments at the inside of inner membrane tubes with the shape and dimensions of crista junctions. This Danio rerio (Zebrafish) protein is Dynamin-like GTPase OPA1, mitochondrial.